We begin with the raw amino-acid sequence, 260 residues long: MGKFPSWVLVADWPPPPGVMALSTLRDGPGVSVAPFDRLNLGNCSGVAGDAPVCVERNRSRLVQMLGLPSVPHWLRQVHGVEVLRVDVLPQSIARVVEPTADAAVTSVAGAVLVILTADCLPVVLAAVDGSEIGVVHAGWRGLADDVLERTVAALRTSPECLQAWLGPAAGPQAYEVGVDVYAAFVERDSGAACAFSVTRPGHWYVDLYALARQRLMRAGLSAVSIYGGGLCTISDPQRFFSHRRDRRSGRFATLAWIGC.

The Zn(2+) site is built by His79, Cys120, and His137.

It belongs to the purine nucleoside phosphorylase YfiH/LACC1 family. Homodimer. The cofactor is Cu(2+). It depends on Zn(2+) as a cofactor.

It carries out the reaction adenosine + phosphate = alpha-D-ribose 1-phosphate + adenine. It catalyses the reaction S-methyl-5'-thioadenosine + phosphate = 5-(methylsulfanyl)-alpha-D-ribose 1-phosphate + adenine. The enzyme catalyses inosine + phosphate = alpha-D-ribose 1-phosphate + hypoxanthine. The catalysed reaction is adenosine + H2O + H(+) = inosine + NH4(+). Purine nucleoside enzyme that catalyzes the phosphorolysis of adenosine and inosine nucleosides, yielding D-ribose 1-phosphate and the respective free bases, adenine and hypoxanthine. Also catalyzes the phosphorolysis of S-methyl-5'-thioadenosine into adenine and S-methyl-5-thio-alpha-D-ribose 1-phosphate. Also has adenosine deaminase activity. This chain is Purine nucleoside phosphorylase PD_1754, found in Xylella fastidiosa (strain Temecula1 / ATCC 700964).